Here is a 332-residue protein sequence, read N- to C-terminus: Large ribosomal subunit protein mL44 (332 aa).

The transit peptide at 1 to 30 (MASGLVRLLQQGPRCLLAPVAPKLVPPVRG) directs the protein to the mitochondrion. The region spanning 86–228 (DLLKTAFVNS…LITQMTGKEL (143 aa)) is the RNase III domain. The DRBM domain occupies 236 to 306 (NPMGLLVEEL…ARVALRKLYG (71 aa)).

This sequence belongs to the ribonuclease III family. Mitochondrion-specific ribosomal protein mL44 subfamily. In terms of assembly, component of the mitochondrial ribosome large subunit (39S) which comprises a 16S rRNA and about 50 distinct proteins.

It localises to the mitochondrion. In terms of biological role, component of the 39S subunit of mitochondrial ribosome. May have a function in the assembly/stability of nascent mitochondrial polypeptides exiting the ribosome. The chain is Large ribosomal subunit protein mL44 (MRPL44) from Pongo abelii (Sumatran orangutan).